Consider the following 627-residue polypeptide: DNA mismatch repair protein MutL (627 aa).

Positions Asp354–Glu364 are enriched in basic and acidic residues. Residues Asp354 to Met374 form a disordered region.

It belongs to the DNA mismatch repair MutL/HexB family.

In terms of biological role, this protein is involved in the repair of mismatches in DNA. It is required for dam-dependent methyl-directed DNA mismatch repair. May act as a 'molecular matchmaker', a protein that promotes the formation of a stable complex between two or more DNA-binding proteins in an ATP-dependent manner without itself being part of a final effector complex. Overexpression of mutSL partially suppresses the high spontaneous mutation frequency of a ytkD/mutM/mutY triple disruption which lacks the system required to prevent damage by oxidized guanine (8-oxo-dGTP). This suggests that MutSL also functions to repair mismatches due to oxidative stress in both growing and stationary phase cells. The sequence is that of DNA mismatch repair protein MutL from Bacillus subtilis (strain 168).